The following is a 179-amino-acid chain: NAD(P)H-quinone oxidoreductase subunit 6, chloroplastic (179 aa).

Helical transmembrane passes span 8–28 (ITLFVLDFFIFVGALGVVFFN), 30–50 (IIYSALFLGLTFLSVALLYLL), 58–78 (VAQVIIYVGAINVLIVFAIML), 98–118 (SFCVNFILFSTIVTMIVTTPW), and 150–170 (VLPFELLSLLLLIALIGAVII).

Belongs to the complex I subunit 6 family. NDH is composed of at least 16 different subunits, 5 of which are encoded in the nucleus.

It localises to the plastid. The protein localises to the chloroplast thylakoid membrane. It catalyses the reaction a plastoquinone + NADH + (n+1) H(+)(in) = a plastoquinol + NAD(+) + n H(+)(out). The catalysed reaction is a plastoquinone + NADPH + (n+1) H(+)(in) = a plastoquinol + NADP(+) + n H(+)(out). Functionally, NDH shuttles electrons from NAD(P)H:plastoquinone, via FMN and iron-sulfur (Fe-S) centers, to quinones in the photosynthetic chain and possibly in a chloroplast respiratory chain. The immediate electron acceptor for the enzyme in this species is believed to be plastoquinone. Couples the redox reaction to proton translocation, and thus conserves the redox energy in a proton gradient. This Chaetosphaeridium globosum (Charophycean green alga) protein is NAD(P)H-quinone oxidoreductase subunit 6, chloroplastic (ndhG).